A 79-amino-acid chain; its full sequence is Small ribosomal subunit protein bS18 (79 aa).

Belongs to the bacterial ribosomal protein bS18 family. In terms of assembly, part of the 30S ribosomal subunit. Forms a tight heterodimer with protein bS6.

Functionally, binds as a heterodimer with protein bS6 to the central domain of the 16S rRNA, where it helps stabilize the platform of the 30S subunit. This is Small ribosomal subunit protein bS18 from Rhodopseudomonas palustris (strain HaA2).